An 838-amino-acid polypeptide reads, in one-letter code: E3 ubiquitin-protein ligase RNF19A (838 aa).

The tract at residues 41 to 61 (DRDLQSSASSVSLPSVKKAPK) is disordered. Low complexity predominate over residues 46–57 (SSASSVSLPSVK). Residues 128–351 (DFIECPLCLL…LSPSGCTFWG (224 aa)) form a TRIAD supradomain region. 18 residues coordinate Zn(2+): C132, C135, C150, H152, C155, C158, C176, C179, C219, C224, C241, C246, C251, C254, H259, C264, C301, and C304. The segment at 132-179 (CPLCLLRHSKDRFPDIMTCHHRSCVDCLRQYLRIEISESRVNISCPEC) adopts an RING-type 1 zinc-finger fold. Residues 199–264 (EKYEEFMLRR…KQIWHPNQTC (66 aa)) form an IBR-type zinc finger. An RING-type 2; atypical zinc finger spans residues 301-332 (CPRCAAYIIKMNDGSCNHMTCAVCGCEFCWLC). The active site involves C316. Zn(2+) is bound by residues C321, C324, C329, C332, H340, and C347. 2 consecutive transmembrane segments (helical) span residues 368–388 (LVGA…AMII) and 424–444 (VIVS…IMLA). 2 disordered regions span residues 622–685 (SKPS…GNMK) and 700–721 (QQST…PSVA). A compositionally biased stretch (polar residues) spans 630–662 (NSGSSSVDDGSATRSHAGGSSSGLPEGKSSATK). Residue S631 is modified to Phosphoserine. Positions 660-838 (ATKWSKEATA…ELKVAIQTEI (179 aa)) are interaction with CASR. A compositionally biased stretch (basic residues) spans 671 to 683 (KKSKSGKLRKKGN). A compositionally biased stretch (polar residues) spans 700–717 (QQSTNSSEFEAPSLSDSM).

This sequence belongs to the RBR family. RNF19 subfamily. Interacts with UBE2L3 and UBE2L6. Interacts with transcription factor Sp1. Interacts with VCP, CASR, SNCAIP and with some SOD1 variants which cause amyotrophic lateral sclerosis, but not with wild-type SOD1. In terms of tissue distribution, widely expressed, with highest levels in heart. Ubiquitously expressed in the central nervous system.

The protein resides in the membrane. The protein localises to the cytoplasm. Its subcellular location is the cytoskeleton. It is found in the microtubule organizing center. It localises to the centrosome. It carries out the reaction [E2 ubiquitin-conjugating enzyme]-S-ubiquitinyl-L-cysteine + [acceptor protein]-L-lysine = [E2 ubiquitin-conjugating enzyme]-L-cysteine + [acceptor protein]-N(6)-ubiquitinyl-L-lysine.. It functions in the pathway protein modification; protein ubiquitination. Functionally, E3 ubiquitin-protein ligase which accepts ubiquitin from E2 ubiquitin-conjugating enzymes UBE2L3 and UBE2L6 in the form of a thioester and then directly transfers the ubiquitin to targeted substrates, such as SNCAIP or CASR. Specifically ubiquitinates pathogenic SOD1 variants, which leads to their proteasomal degradation and to neuronal protection. This is E3 ubiquitin-protein ligase RNF19A (RNF19A) from Homo sapiens (Human).